The sequence spans 91 residues: Cell division topological specificity factor (91 aa).

Belongs to the MinE family.

In terms of biological role, prevents the cell division inhibition by proteins MinC and MinD at internal division sites while permitting inhibition at polar sites. This ensures cell division at the proper site by restricting the formation of a division septum at the midpoint of the long axis of the cell. The polypeptide is Cell division topological specificity factor (Chloroflexus aggregans (strain MD-66 / DSM 9485)).